We begin with the raw amino-acid sequence, 979 residues long: MTCADVTDLCTQASQLVQQLRTKDGELGFMSAAVYDTAWVSMVQKTTPEGRQWLLPKCFEYILRTQLEDGSWETYASDVDGILNTAASLLALETHAESRIASTDPPVEEMKERIGRARAALSRQLQAWSVKDTVHVGFEIILPALLRLLREKGHEFEFDGRAELDRLNRIKLSKFRPEYLYSARTTALHSLEAFVGMIDFDKVAHQKVNGSFMFSPSSTAAFLMFSSSWDDECEQYLRLVLQNGAGGGTGGMPSAYPSKYFEVSWVRGQLARLESKLTELQALTTLLDNGYSTGDLGIEDTDSLGEMLRDALVKGGGIVGFAPSIQADADDTAKSLIAVSLLDKPVSAQGLIDAFEGPMHFRTYHGERDPSFTANSNVLLALLNTPDAATVSPQIEKAAAFLCDVWWTADSEIGDKWNLSPYYPSMLMAEAFGKLLQVWSDGGLKSISSQFIRDRVSVCLYQALVRTLQTQNENGSWGSHSHEETAYAILTIAHACQLPVVNQLWTNVQLAVSRGRKFLQNSAGDKAEYLWVEKVTYSSILLSKSYVLAALKVSFERSYPACLANLFIVSKKRVIEFARFHSMLPLFSSMELWKVRAAIVEGYLLLPQLRDRRLAVFSRTGMEEDKYFEYIPFTWTLCNNRRNTFLSTKTLVEMMVISFLNYQADEFMEAVVGRLNSSQRSMTRSCIDEIFRDLKDKPELNDAIQAQSGPRNADANGHRILPQAKRIKMGSQLPSDVSRVLSAFVHHVMDHPSVKAAAPLEYERVKNELQVFLLSHIEQADDNGRFAAQLESTRDDFETARSSFYRWVSSTSSDHTSCPYSFAFYQCLLGFEQASHNAACFQTCEEKYVAEAMCRHLAVMCRMYNDYGSLARDRDEKNLNCVNFPEFAQAGPKSDAVRQKQLFSLAEFERSNMKRGLEVLTEMAAQDRAKMRMLEKVQMFCDVTDVYGQIYALEILRVGCDLAHDCFMLELPAQWSNST.

The VYDTAW motif motif lies at 34–39 (VYDTAW). A DXDD B-type cyclization motif motif is present at residues 328–331 (DADD). Mg(2+) contacts are provided by Asp665, Glu669, Asn865, Asp866, Ser869, and Asp873. A DEXXE A-type cyclization motif motif is present at residues 665-669 (DEFME).

It belongs to the terpene synthase family. Requires Mg(2+) as cofactor.

It catalyses the reaction (2E,6E,10E)-geranylgeranyl diphosphate = ent-copalyl diphosphate. It carries out the reaction ent-copalyl diphosphate = ent-pimara-8(14),15-diene + diphosphate. It functions in the pathway secondary metabolite biosynthesis; terpenoid biosynthesis. Bifunctional terpene synthase; part of the gene cluster that mediates the biosynthesis of the diterpene ent-pimara-8(14),15-diene (PD). Within the cluster, the HMG-CoA reductase AN1593 functions in the mevalonate pathway, which produces isoprenoid precursors. The geranylgeranyl pyrophosphate (GGPP) synthase AN1592 is needed in the formation of GGPP, the precursor for diterpenes. Lastly, the pimaradiene synthase pbcA performs the 2 cyclization steps that convert GGPP to ent-pimara-8(14),15-diene with ent-copalyl diphosphate as an intermediate. The putative roles of the remaining cluster enzymes in ent-pimara-8(14),15-diene biosynthesis is unclear. The cytochrome P450 monooxygenase AN1598, the glutathione S-transferase AN1595, the oxidoreductases AN1596 and AN1597 probably function as decorative enzymes. It is possible that in biological conditions the compound is oxidized to ent-pimara-8(14),15-dien-19-oic acid, which is a bioactive diterpene compound predominant in many plant extracts. The protein is Pimaradiene synthase pbcA of Emericella nidulans (strain FGSC A4 / ATCC 38163 / CBS 112.46 / NRRL 194 / M139) (Aspergillus nidulans).